The chain runs to 118 residues: Transmembrane protein 243 (118 aa).

M1 is modified (N-acetylmethionine). Helical transmembrane passes span 32-52 (LVVGSLTSLLILVTLISAFVF), 62-82 (IFFAVCISLSSITACILIYWY), and 94-114 (LIYYIIFSIIMLCICANLYFH).

This sequence belongs to the TMEM243 family. As to expression, widely expressed.

It localises to the membrane. In Homo sapiens (Human), this protein is Transmembrane protein 243 (TMEM243).